Consider the following 216-residue polypeptide: MIITIDGPSGTGKSTLAKALAQTLQFLYCNTGAMYRTLAYARLQPDWQEVPLEDFLASPPFSFSFSKDSPLQAFYGDRLLTSELSSQEVANFASLFSKEPLVRAYMQTLQKQYATVGNCVFEGRDMGSKVFPHAEVKIFLTAKPEIRAERRLKDLPQGSLPKEALMAELIARDQADQQRECDPLVIPQDAIVIDSSDLTISQILEKILPLIPSHLT.

Position 7 to 15 (7 to 15 (GPSGTGKST)) interacts with ATP.

Belongs to the cytidylate kinase family. Type 1 subfamily.

It is found in the cytoplasm. The catalysed reaction is CMP + ATP = CDP + ADP. It catalyses the reaction dCMP + ATP = dCDP + ADP. In Chlamydia trachomatis serovar L2 (strain ATCC VR-902B / DSM 19102 / 434/Bu), this protein is Cytidylate kinase.